We begin with the raw amino-acid sequence, 424 residues long: Satellite RNA 48 kDa protein (424 aa).

The segment at 15 to 78 is disordered; the sequence is TQTRPRIVPK…SNNPGRPSRK (64 aa). 2 stretches are compositionally biased toward polar residues: residues 31 to 42 and 62 to 73; these read RTYSRPRSSLSD and NGSQGRCSNNPG.

The protein belongs to the nepovirus satellite RNA 48 kDa protein family.

The sequence is that of Satellite RNA 48 kDa protein from Allium porrum (Leek).